A 399-amino-acid polypeptide reads, in one-letter code: C-type lectin domain family 4 member M (399 aa).

The Cytoplasmic portion of the chain corresponds to 1–49 (MSDSKEQRVQPLGLLEEDPTTSGIRLFPRDFQFQQTHGHKSSTGCLGHG). Positions 14-15 (LL) match the Endocytosis signal motif. A helical; Signal-anchor for type II membrane protein transmembrane segment spans residues 50 to 70 (PLVLQLLSFTLLAGFLVAILV). At 71–399 (QVYKGPSSLS…KKPTACFRDE (329 aa)) the chain is on the extracellular side. Residue Asn92 is glycosylated (N-linked (GlcNAc...) asparagine). 7 tandem repeats follow at residues 108–130 (KLQEIYQELTQLKAAVGELPEKS), 131–153 (RLQEIYQELTRLKAAVGELPENS), 154–176 (RLQEIYQELTQLKAAVGELPEKS), 177–199 (KQQEIYQELTRLKAAVGELPEKS), 200–222 (KQQEIYQELTRLKAAVGELPEKS), 223–245 (KQQEIYQELTRLKAAVGELPDQS), and 246–268 (KQQQIYQELTDLKTAFERLCCRC). The 7 X approximate tandem repeats stretch occupies residues 108-269 (KLQEIYQELT…AFERLCCRCP (162 aa)). Intrachain disulfides connect Cys265–Cys395, Cys268–Cys279, Cys296–Cys389, and Cys368–Cys381. The C-type lectin domain maps to 274 to 390 (FFQGNCYFIS…CNVDNYWICK (117 aa)). Residues Glu359, Asn361, Ser363, Glu366, Asn377, and Asp378 each contribute to the Ca(2+) site. Residue Asn361 is glycosylated (N-linked (GlcNAc...) asparagine).

In terms of assembly, homotetramer.

The protein localises to the membrane. Probable pathogen-recognition receptor involved in peripheral immune surveillance in liver. May mediate the endocytosis of pathogens which are subsequently degraded in lysosomal compartments. Probably recognizes in a calcium-dependent manner high mannose N-linked oligosaccharides in a variety of pathogen antigens. Is a receptor for ICAM3, probably by binding to mannose-like carbohydrates. This is C-type lectin domain family 4 member M (CLEC4M) from Nomascus concolor (Black crested gibbon).